We begin with the raw amino-acid sequence, 40 residues long: MAVAALAMYGGTCGACAVLACNWNVRECGIIWKNLFEVKK.

Positions 1–17 (MAVAALAMYGGTCGACA) are cleaved as a signal peptide.

This is an uncharacterized protein from Archaeoglobus fulgidus (strain ATCC 49558 / DSM 4304 / JCM 9628 / NBRC 100126 / VC-16).